A 442-amino-acid chain; its full sequence is Matrix remodeling-associated protein 8 (442 aa).

The first 19 residues, 1 to 19, serve as a signal peptide directing secretion; that stretch reads MELLSRVLLWKLLLLQSSA. Residues 20–340 lie on the Extracellular side of the membrane; sequence VLSSGPSGTA…PEDHTHFFQQ (321 aa). 2 Ig-like V-type domains span residues 25–156 and 159–291; these read PSGT…LEVT and PLLS…LQVT. Intrachain disulfides connect C53–C136 and C185–C271. A glycan (N-linked (GlcNAc...) asparagine) is linked at N118. Residues 128 to 130 carry the RGD 1 motif; it reads RGD. Residue S227 is modified to Phosphoserine. The short motif at 251–253 is the RGD 2 element; sequence RGD. Residues 296-319 form a disordered region; sequence EPPARASPGNGSGHSSAPSPDPTL. N305 carries N-linked (GlcNAc...) asparagine glycosylation. The helical transmembrane segment at 341 to 361 threads the bilayer; that stretch reads LGYVLATLLLFILLLITVVLA. At 362 to 442 the chain is on the cytoplasmic side; it reads TRYRHSGGCK…DKEFRKEYCK (81 aa).

In terms of assembly, homodimer in cis. Does not appear to form trans-homodimers. Interacts with ITGB3; the interaction inhibits ITGAV:ITGB3 heterodimer formation. Widely expressed (at protein level). Highly expressed in brain where it localizes to the glia limitans, which is formed by the endfeet of astrocytes surrounding capillaries, and beneath the pia mater (at protein level). In lung, detected in epithelial cells of the bronchus (at protein level). Expressed in intercalated disks in the heart (at protein level). Detected in pancreatic alpha-cells in the islet of Langerhans (at protein level). In kidney, found in the brush border of the proximal convoluted tubule (at protein level). Expressed in the epithelium of the small intestine (at protein level). Weakly expressed in liver (at protein level). Detected in myeloid cells.

Its subcellular location is the cell membrane. The protein localises to the cell junction. The protein resides in the tight junction. It is found in the cytoplasm. It localises to the cell projection. Its subcellular location is the cilium membrane. The protein localises to the nucleus. Its function is as follows. Transmembrane protein which can modulate activity of various signaling pathways, probably via binding to integrin ITGAV:ITGB3. Mediates heterophilic cell-cell interactions in vitro. Inhibits osteoclastogenesis downstream of TNFSF11/RANKL and CSF1, where it may function by attenuating signaling via integrin ITGB3 and MAP kinase p38. Plays a role in cartilage formation where it promotes proliferation and maturation of growth plate chondrocytes. Stimulates formation of primary cilia in chondrocytes. Enhances expression of genes involved in the hedgehog signaling pathway in chondrocytes, including the hedgehog signaling molecule IHH; may also promote signaling via the PTHLH/PTHrP pathway. Plays a role in angiogenesis where it suppresses migration of endothelial cells and also promotes their apoptosis. Inhibits VEGF-induced activation of AKT and p38 MAP kinase in endothelial cells. Also inhibits VTN (vitronectin)-mediated integrin ITGAV:ITGB3 signaling and activation of PTK2/FAK. May play a role in the maturation and maintenance of the blood-brain barrier. In Mus musculus (Mouse), this protein is Matrix remodeling-associated protein 8.